The following is a 278-amino-acid chain: HTH-type transcriptional activator RhaS (278 aa).

An HTH araC/xylS-type domain is found at 174–272 (NQLLAWLEDH…DWSPRDIRQG (99 aa)). DNA-binding regions (H-T-H motif) lie at residues 191–212 (ESIA…KQQT) and 239–262 (VTDI…RREF).

Binds DNA as a dimer.

The protein localises to the cytoplasm. Activates expression of the rhaBAD and rhaT operons. The sequence is that of HTH-type transcriptional activator RhaS from Citrobacter koseri (strain ATCC BAA-895 / CDC 4225-83 / SGSC4696).